Here is a 256-residue protein sequence, read N- to C-terminus: Putative ankyrin repeat protein PAE1861 (256 aa).

ANK repeat units follow at residues 1–30, 34–63, 67–92, 93–122, 124–151, 155–184, 188–214, and 218–245; these read MDCNNLLNAARRGEAELLTRLLNEGCSPDV, YGRTPLYYAAERGDVGTVDLLIKAGADPNA, EGKTPIIIATQSRKFGVIPLLSASAV, GVEEALYTAARNGCHKAVRYMLARGVRPGA, HGESLLHLVAGDAGLVKLLLEYGVDPNA, HGKTPLHMASEHNCAQCVELLLKRGPDVNV, AGRTPLHYADDVDCIKLLLRYGADLNA, and MGRTPLHYAEDGLAAEALLKRGARPVPD.

In Pyrobaculum aerophilum (strain ATCC 51768 / DSM 7523 / JCM 9630 / CIP 104966 / NBRC 100827 / IM2), this protein is Putative ankyrin repeat protein PAE1861.